The primary structure comprises 397 residues: MVSSSTIKSLIEKKGKDLPESVKQELYEKLIKYNEKYKLTKVEVETIIDEVIKEYEKALIEPGEAVGTVAAQSIGEPSTQMTLNTFHYAGVAEINVTLGLPRIIEIVDARKNPSTPMMTVYLDEEHRYDREKAEEVARRIEGTTLENLARTTTLDLINMEFIVEVDPERLEKSGLTMEKILKKLQSSFKSAEFEADGYTLIVRPKKIEKISDLRRLSEKVKKHRLKGLSGVGKTIIRKEGDEYVIYTEGSNFKQVLKVPGVDPTRTRTNNIHEIAEVLGIEAARNAIIEEIINTMHEQGLEVDIRHIMLVADIMTLDGVVRPIGRHGVVGEKASVLARAAFEITVQHLFEAAERGEVDNLSGVIENVLIGQPVPVGTGMVKLTMKLPLKPQKEKEEV.

The protein belongs to the RNA polymerase beta' chain family. As to quaternary structure, part of the RNA polymerase complex.

The protein resides in the cytoplasm. It catalyses the reaction RNA(n) + a ribonucleoside 5'-triphosphate = RNA(n+1) + diphosphate. In terms of biological role, DNA-dependent RNA polymerase (RNAP) catalyzes the transcription of DNA into RNA using the four ribonucleoside triphosphates as substrates. Forms part of the jaw domain. This is DNA-directed RNA polymerase subunit Rpo1C from Pyrococcus horikoshii (strain ATCC 700860 / DSM 12428 / JCM 9974 / NBRC 100139 / OT-3).